The sequence spans 74 residues: Cytochrome b (74 aa).

The helical transmembrane segment at 34–54 (FGSLLAICLVTQILTGLLLAM) threads the bilayer.

It belongs to the cytochrome b family. The cytochrome bc1 complex contains 11 subunits: 3 respiratory subunits (MT-CYB, CYC1 and UQCRFS1), 2 core proteins (UQCRC1 and UQCRC2) and 6 low-molecular weight proteins (UQCRH/QCR6, UQCRB/QCR7, UQCRQ/QCR8, UQCR10/QCR9, UQCR11/QCR10 and a cleavage product of UQCRFS1). This cytochrome bc1 complex then forms a dimer. It depends on heme as a cofactor.

It localises to the mitochondrion inner membrane. Functionally, component of the ubiquinol-cytochrome c reductase complex (complex III or cytochrome b-c1 complex) that is part of the mitochondrial respiratory chain. The b-c1 complex mediates electron transfer from ubiquinol to cytochrome c. Contributes to the generation of a proton gradient across the mitochondrial membrane that is then used for ATP synthesis. The sequence is that of Cytochrome b (MT-CYB) from Anser caerulescens (Snow goose).